The chain runs to 468 residues: 6-phospho-beta-galactosidase (468 aa).

5 residues coordinate D-galactose 6-phosphate: Gln-19, His-116, Asn-159, Glu-160, and Asn-297. The active-site Proton donor is the Glu-160. Glu-375 functions as the Nucleophile in the catalytic mechanism. Ser-428, Trp-429, Lys-435, and Tyr-437 together coordinate D-galactose 6-phosphate.

This sequence belongs to the glycosyl hydrolase 1 family.

It catalyses the reaction a 6-phospho-beta-D-galactoside + H2O = D-galactose 6-phosphate + an alcohol. The protein operates within carbohydrate metabolism; lactose degradation; D-galactose 6-phosphate and beta-D-glucose from lactose 6-phosphate: step 1/1. The sequence is that of 6-phospho-beta-galactosidase from Streptococcus pyogenes serotype M28 (strain MGAS6180).